The sequence spans 177 residues: Large ribosomal subunit protein uL6 (177 aa).

Belongs to the universal ribosomal protein uL6 family. In terms of assembly, part of the 50S ribosomal subunit.

In terms of biological role, this protein binds to the 23S rRNA, and is important in its secondary structure. It is located near the subunit interface in the base of the L7/L12 stalk, and near the tRNA binding site of the peptidyltransferase center. In Sinorhizobium fredii (strain NBRC 101917 / NGR234), this protein is Large ribosomal subunit protein uL6.